The chain runs to 212 residues: ER lumen protein-retaining receptor 1 (212 aa).

Residues 1–4 are Lumenal-facing; sequence MNIF. The chain crosses the membrane as a helical span at residues 5 to 24; that stretch reads RFLGDISHLSAILILLLKIW. Topologically, residues 25-32 are cytoplasmic; sequence KSRSCAGI. The chain crosses the membrane as a helical span at residues 33–52; sequence SGKSQLLFAIVFTTRYLDLF. Positions 47–48 are interaction with the K-D-E-L motif on target proteins; that stretch reads RY. The Lumenal segment spans residues 53–58; it reads TNFISL. The chain crosses the membrane as a helical span at residues 59–79; the sequence is YNTSMKMVYVASSYATIWMIY. Over 80–92 the chain is Cytoplasmic; sequence SKFKATYDGNHDT. Residues 93 to 110 form a helical membrane-spanning segment; sequence FRVEFLIVPTAILAFLVN. At 111–116 the chain is on the lumenal side; that stretch reads HDFTPL. A helical membrane pass occupies residues 117–135; the sequence is EILWTFSIYLESVAILPQL. At 136–149 the chain is on the cytoplasmic side; it reads FMVSKTGEAETITS. Residues 150–168 traverse the membrane as a helical segment; the sequence is HYLFALGIYRALYLFNWIW. The interaction with the K-D-E-L motif on target proteins stretch occupies residues 159 to 169; that stretch reads RALYLFNWIWR. The Lumenal portion of the chain corresponds to 169-178; the sequence is RYQFEGFFDL. Residues 179–199 traverse the membrane as a helical segment; the sequence is IAIVAGLVQTVLYCDFFYLYI. Over 200 to 212 the chain is Cytoplasmic; it reads TKVLKGKKLSLPA. The tract at residues 204–207 is important for recycling of cargo proteins with the sequence motif K-D-E-L from the Golgi to the endoplasmic reticulum; sequence KGKK.

Belongs to the ERD2 family.

The protein resides in the golgi apparatus membrane. The protein localises to the cytoplasmic vesicle. It localises to the COPI-coated vesicle membrane. It is found in the endoplasmic reticulum membrane. Its subcellular location is the endoplasmic reticulum-Golgi intermediate compartment membrane. Its function is as follows. Receptor for the C-terminal sequence motif K-D-E-L that is present on endoplasmic reticulum resident proteins and that mediates their recycling from the Golgi back to the endoplasmic reticulum. The chain is ER lumen protein-retaining receptor 1 (kdelr1) from Xenopus tropicalis (Western clawed frog).